We begin with the raw amino-acid sequence, 313 residues long: MTVPNDDTWGPATSVGTTATMAAAARAIATRDGVINDPFAEPLVRAVGVNFLTRWAIGELVASDVDVEGSPWGLAQMPASIAARTRYFDEFYADAAAAGIRQAVILASGLDTRAYRLDWPAGMTVFEIDQPAVIEFKTTALARLGAEPKADLRTVAVDLRDDWSTALATAGLDSSKPTAWIAEGLFGYLAPEAQDGLLDAVTALSTPGSRLGSEAVPNTADMDPHAARERMRAATAKWRDHGFELDVDVISFAGERHDVGAYLQAHGWTTVATPMAELLADHGLPAIARADDDRQTMNGVTYYTSTLGTGRQR.

S-adenosyl-L-methionine contacts are provided by residues D129 and 158-159; that span reads DL.

Belongs to the UPF0677 family.

Exhibits S-adenosyl-L-methionine-dependent methyltransferase activity. This chain is Putative S-adenosyl-L-methionine-dependent methyltransferase MAP_4064c, found in Mycolicibacterium paratuberculosis (strain ATCC BAA-968 / K-10) (Mycobacterium paratuberculosis).